Reading from the N-terminus, the 367-residue chain is rRNA processing protein RCL1 (367 aa).

S2 is modified (N-acetylserine).

This sequence belongs to the RNA 3'-terminal cyclase family. Type 2 subfamily. As to quaternary structure, interacts directly with BMS1 and the U3 snoRNA to form a stable subcomplex. Component of the 90S small subunit processome also known as 90S pre-ribosome that consists of the 35S pre-rRNA, early-associating ribosomal proteins most of which are part of the small ribosomal subunit, the U3 snoRNA and associated proteins.

Its subcellular location is the nucleus. The protein resides in the nucleolus. Does not have cyclase activity. Plays a role in 40S-ribosomal-subunit biogenesis in the early pre-rRNA processing steps at sites A0, A1 and A2 that are required for proper maturation of the 18S RNA. RCL1 activates BMS1 by promoting GDP/GTP exchange. The sequence is that of rRNA processing protein RCL1 (RCL1) from Saccharomyces cerevisiae (strain ATCC 204508 / S288c) (Baker's yeast).